The chain runs to 189 residues: Interleukin-23 subunit alpha (189 aa).

An N-terminal signal peptide occupies residues 1–19 (MLGSTAVMLLLLLPWTAQT).

This sequence belongs to the IL-6 superfamily. Heterodimer with IL12B; disulfide-linked. The heterodimer is known as interleukin IL-23. Interacts with IL23R; this interaction enables recruitment of IL12RB1.

It is found in the secreted. In terms of biological role, associates with IL12B to form the pro-inflammatory cytokine IL-23 that plays different roles in innate and adaptive immunity. Released by antigen-presenting cells such as dendritic cells or macrophages, binds to a heterodimeric receptor complex composed of IL12RB1 and IL23R to activate JAK2 and TYK2 which then phosphorylate the receptor to form a docking site leading to the phosphorylation of STAT3 and STAT4. This process leads to activation of several pathways including p38 MAPK or NF-kappa-B and promotes the production of pro-inflammatory cytokines such as interleukin-17A/IL17A. In turn, participates in the early and effective intracellular bacterial clearance. Promotes the expansion and survival of T-helper 17 cells, a CD4-positive helper T-cell subset that produces IL-17, as well as other IL-17-producing cells. The chain is Interleukin-23 subunit alpha (IL23A) from Cavia porcellus (Guinea pig).